The sequence spans 330 residues: 7,8-didemethyl-8-hydroxy-5-deazariboflavin synthase (330 aa).

In terms of domain architecture, Radical SAM core spans 13–253 (VTFSKNAFIP…EDISIQVPPN (241 aa)). 3 residues coordinate [4Fe-4S] cluster: Cys27, Cys31, and Cys34.

This sequence belongs to the radical SAM superfamily. CofG family. Consists of two subunits, CofG and CofH. [4Fe-4S] cluster serves as cofactor.

It catalyses the reaction 5-amino-5-(4-hydroxybenzyl)-6-(D-ribitylimino)-5,6-dihydrouracil + S-adenosyl-L-methionine = 7,8-didemethyl-8-hydroxy-5-deazariboflavin + 5'-deoxyadenosine + L-methionine + NH4(+) + H(+). Its pathway is cofactor biosynthesis; coenzyme F0 biosynthesis. Its function is as follows. Catalyzes the radical-mediated synthesis of 7,8-didemethyl-8-hydroxy-5-deazariboflavin from 5-amino-5-(4-hydroxybenzyl)-6-(D-ribitylimino)-5,6-dihydrouracil. The chain is 7,8-didemethyl-8-hydroxy-5-deazariboflavin synthase from Methanococcus maripaludis (strain DSM 14266 / JCM 13030 / NBRC 101832 / S2 / LL).